A 171-amino-acid polypeptide reads, in one-letter code: Adenine phosphoribosyltransferase (171 aa).

The protein belongs to the purine/pyrimidine phosphoribosyltransferase family. In terms of assembly, homodimer.

It is found in the cytoplasm. The catalysed reaction is AMP + diphosphate = 5-phospho-alpha-D-ribose 1-diphosphate + adenine. The protein operates within purine metabolism; AMP biosynthesis via salvage pathway; AMP from adenine: step 1/1. Catalyzes a salvage reaction resulting in the formation of AMP, that is energically less costly than de novo synthesis. This chain is Adenine phosphoribosyltransferase, found in Geotalea daltonii (strain DSM 22248 / JCM 15807 / FRC-32) (Geobacter daltonii).